Here is a 374-residue protein sequence, read N- to C-terminus: Potassium channel subfamily K member 9 (374 aa).

Topologically, residues Met-1 to Thr-8 are cytoplasmic. A helical membrane pass occupies residues Leu-9–Leu-29. At Glu-30–Ile-88 the chain is on the extracellular side. Residue Asn-53 is glycosylated (N-linked (GlcNAc...) asparagine). The pore-forming intramembrane region spans Thr-89–Pro-101. The K(+) site is built by Thr-93, Ile-94, Gly-95, and Tyr-96. Positions Thr-93–His-98 are selectivity filter 1. The Extracellular portion of the chain corresponds to Gly-102–Lys-107. Residues Ala-108 to Leu-128 traverse the membrane as a helical segment. Topologically, residues Gly-129–Asn-158 are cytoplasmic. The chain crosses the membrane as a helical span at residues Met-159–Ser-179. Over Gln-180–Phe-194 the chain is Extracellular. The segment at residues Ile-195–Ala-207 is an intramembrane region (pore-forming). K(+) contacts are provided by Thr-199, Ile-200, Gly-201, and Phe-202. The interval Thr-199 to Asp-204 is selectivity filter 2. The Extracellular portion of the chain corresponds to Leu-208 to Pro-218. A helical transmembrane segment spans residues Leu-219–Leu-239. Over Asn-240–Val-374 the chain is Cytoplasmic. An X-gate region spans residues Val-243 to Thr-248.

Belongs to the two pore domain potassium channel (TC 1.A.1.8) family. As to quaternary structure, homodimer. Heterodimer with KCNK1. Heterodimer with KCNK3. In terms of tissue distribution, mainly found in the cerebellum. Also found in adrenal gland, kidney and lung.

Its subcellular location is the cell membrane. The protein resides in the mitochondrion inner membrane. It is found in the cell projection. It localises to the dendrite. It carries out the reaction K(+)(in) = K(+)(out). It catalyses the reaction Na(+)(in) = Na(+)(out). Inhibited by extracellular acidification adopting a nonconductive conformation at pH 6.0. Inhibited by phorbol 12-myristate 13-acetate (PMA). K(+) channel that conducts voltage-dependent outward rectifying currents upon membrane depolarization. Voltage sensing is coupled to K(+) electrochemical gradient in an 'ion flux gating' mode where outward but not inward ion flow opens the gate. Changes ion selectivity and becomes permeable to Na(+) ions in response to extracellular acidification. Protonation of the pH sensor His-98 stabilizes C-type inactivation conformation likely converting the channel from outward K(+)-conducting, to inward Na(+)-conducting to nonconductive state. Homo- and heterodimerizes to form functional channels with distinct regulatory and gating properties. Allows K(+) currents with fast-gating kinetics important for the repolarization and hyperpolarization phases of action potentials. In granule neurons, hyperpolarizes the resting membrane potential to limit intrinsic neuronal excitability, but once the action potential threshold is reached, supports high-frequency action potential firing and increased neuronal excitability. Homomeric and/or heteromeric KCNK3:KCNK9 channels operate in cerebellar granule cells, whereas heteromeric KCNK1:KCNK9 enables currents in hippocampal dentate gyrus granule neurons. Dispensable for central chemosensory respiration i.e. breathing controlled by brainstem CO2/pH, it rather conducts pH-sensitive currents and controls the firing rate of serotonergic raphe neurons involved in potentiation of the respiratory chemoreflex. In retinal ganglion cells, mediates outward currents that regulate action potentials in response to acidification of the synaptic cleft. Involved in transmission of image-forming and nonimage-forming visual information in the retina. In adrenal gland, contributes to the maintenance of a hyperpolarized resting membrane potential of aldosterone-producing cells at zona glomerulosa and limits aldosterone release as part of a regulatory mechanism that controls arterial blood pressure and electrolyte homeostasis. The chain is Potassium channel subfamily K member 9 from Homo sapiens (Human).